The chain runs to 481 residues: Protein NRT1/ PTR FAMILY 1.3 (481 aa).

A run of 12 helical transmembrane segments spans residues Leu-32 to Gly-52, Ala-57 to Ile-77, Ile-88 to Ile-108, Leu-124 to Val-144, Phe-173 to Phe-193, Ile-202 to Ser-222, Ile-259 to Leu-279, Ile-302 to Leu-322, Leu-333 to Leu-353, Ala-374 to Ala-394, Ala-422 to Ile-442, and Leu-451 to Trp-471.

This sequence belongs to the major facilitator superfamily. Proton-dependent oligopeptide transporter (POT/PTR) (TC 2.A.17) family. In terms of tissue distribution, expressed in roots.

It is found in the membrane. This Arabidopsis thaliana (Mouse-ear cress) protein is Protein NRT1/ PTR FAMILY 1.3 (NPF1.3).